The chain runs to 85 residues: Dr hemagglutinin AFA-III operon regulatory protein AfaF (85 aa).

To E.coli PapI and DaaF.

Functionally, may have a possible regulatory function on the expression of the other AFA-III genes. The sequence is that of Dr hemagglutinin AFA-III operon regulatory protein AfaF (afaF) from Escherichia coli.